Reading from the N-terminus, the 191-residue chain is MGKSCKVVVCGQASVGKTSILEQLLYGNHVVGSEMIETQEDIYVGSIETDRGVREQVRFYDTRGLRDGAELPKHCFSCTDGYVLVYSTDSRESFQRVELLKKEIDKSKDKKEVTIVVLGNKCDLQEQRRVDPDVAQHWAKSEKVKLWEVSVADRRSLLEPFIYLASKMTQPQSKSAFPLSRKNKGSGSLDG.

Residues 1-191 (MGKSCKVVVC…KNKGSGSLDG (191 aa)) form a small GTPase-like region. 11 to 18 (GQASVGKT) serves as a coordination point for GTP. The short motif at 35–43 (MIETQEDIY) is the Effector region element. GTP-binding positions include 61 to 65 (DTRGL) and 120 to 123 (NKCD). The segment at 169 to 191 (TQPQSKSAFPLSRKNKGSGSLDG) is disordered.

It belongs to the small GTPase superfamily. Ras family. KappaB-Ras subfamily. In terms of assembly, interacts with both NF-kappa-B inhibitor alpha (NFKBIA) and beta (NFKBIB) in vitro. However, it probably only interacts with NFKBIB in vivo. Interacts with GFOD1.

The protein localises to the cytoplasm. Its function is as follows. Atypical Ras-like protein that acts as a potent regulator of NF-kappa-B activity by preventing the degradation of NF-kappa-B inhibitor beta (NFKBIB) by most signals, explaining why NFKBIB is more resistant to degradation. May act by blocking phosphorylation of NFKBIB and nuclear localization of p65/RELA NF-kappa-B subunit. It is unclear whether it acts as a GTPase. Both GTP- and GDP-bound forms block phosphorylation of NFKBIB. The polypeptide is NF-kappa-B inhibitor-interacting Ras-like protein 2 (Nkiras2) (Mus musculus (Mouse)).